A 123-amino-acid chain; its full sequence is Small ribosomal subunit protein uS12c (123 aa).

The segment at 9–31 (RNKRQAAENKTKSPALQRSPQRR) is disordered.

It belongs to the universal ribosomal protein uS12 family. In terms of assembly, part of the 30S ribosomal subunit.

It localises to the plastid. Its subcellular location is the chloroplast. Its function is as follows. With S4 and S5 plays an important role in translational accuracy. Located at the interface of the 30S and 50S subunits. This chain is Small ribosomal subunit protein uS12c (rps12), found in Spirogyra maxima (Green alga).